The primary structure comprises 284 residues: MKQKVVNIGDIKVANDLPFVLFGGMNVLESRDLAMRICEHYVTVTQKLGIPYVFKASFDKANRSSIHSYRGPGLEEGMKIFQELKQTFGVKVITDVHEASQAQPVADVVDVIQLPAFLARQTDLVEAMAKTGAVINVKKPQFVSPGQMGNIVDKFHEGGNDKVILCDRGANFGYDNLVVDMLGFGVMKKVSGNCPVIFDVTHALQCRDPFGAASGGRRGQVTELARAGMAVGLAGLFLESHPDPANAKCDGPSALPLAKLEQFLTQIKAIDDLVKSFDELDTEN.

This sequence belongs to the KdsA family.

It is found in the cytoplasm. The catalysed reaction is D-arabinose 5-phosphate + phosphoenolpyruvate + H2O = 3-deoxy-alpha-D-manno-2-octulosonate-8-phosphate + phosphate. Its pathway is carbohydrate biosynthesis; 3-deoxy-D-manno-octulosonate biosynthesis; 3-deoxy-D-manno-octulosonate from D-ribulose 5-phosphate: step 2/3. It functions in the pathway bacterial outer membrane biogenesis; lipopolysaccharide biosynthesis. This chain is 2-dehydro-3-deoxyphosphooctonate aldolase, found in Salmonella arizonae (strain ATCC BAA-731 / CDC346-86 / RSK2980).